We begin with the raw amino-acid sequence, 238 residues long: Large ribosomal subunit protein uL1 (238 aa).

The interval 217–238 (TNGPGVPVDETIQKNYADDAEA) is disordered.

Belongs to the universal ribosomal protein uL1 family. As to quaternary structure, part of the 50S ribosomal subunit.

In terms of biological role, binds directly to 23S rRNA. The L1 stalk is quite mobile in the ribosome, and is involved in E site tRNA release. Functionally, protein L1 is also a translational repressor protein, it controls the translation of the L11 operon by binding to its mRNA. The sequence is that of Large ribosomal subunit protein uL1 from Corynebacterium urealyticum (strain ATCC 43042 / DSM 7109).